The chain runs to 173 residues: Crossover junction endodeoxyribonuclease RuvC (173 aa).

Residues Asp-8, Glu-67, and Asp-139 contribute to the active site. Mg(2+) contacts are provided by Asp-8, Glu-67, and Asp-139.

Belongs to the RuvC family. As to quaternary structure, homodimer which binds Holliday junction (HJ) DNA. The HJ becomes 2-fold symmetrical on binding to RuvC with unstacked arms; it has a different conformation from HJ DNA in complex with RuvA. In the full resolvosome a probable DNA-RuvA(4)-RuvB(12)-RuvC(2) complex forms which resolves the HJ. Mg(2+) is required as a cofactor.

It is found in the cytoplasm. It catalyses the reaction Endonucleolytic cleavage at a junction such as a reciprocal single-stranded crossover between two homologous DNA duplexes (Holliday junction).. The RuvA-RuvB-RuvC complex processes Holliday junction (HJ) DNA during genetic recombination and DNA repair. Endonuclease that resolves HJ intermediates. Cleaves cruciform DNA by making single-stranded nicks across the HJ at symmetrical positions within the homologous arms, yielding a 5'-phosphate and a 3'-hydroxyl group; requires a central core of homology in the junction. The consensus cleavage sequence is 5'-(A/T)TT(C/G)-3'. Cleavage occurs on the 3'-side of the TT dinucleotide at the point of strand exchange. HJ branch migration catalyzed by RuvA-RuvB allows RuvC to scan DNA until it finds its consensus sequence, where it cleaves and resolves the cruciform DNA. Functionally, plays a role in recovery after DNA ADP-ribosylation, probably via replication fork reversal. This Escherichia coli O127:H6 (strain E2348/69 / EPEC) protein is Crossover junction endodeoxyribonuclease RuvC.